The chain runs to 630 residues: Sodium-dependent serotonin transporter (630 aa).

Residues 1–87 (METTALNSQK…ERETWGKKVD (87 aa)) lie on the Cytoplasmic side of the membrane. Tyr-47 carries the phosphotyrosine modification. A helical membrane pass occupies residues 88 to 112 (FLLSVIGYAVDLGNIWRFPYVCYQN). Residues Gly-94, Ala-96, Val-97, Asp-98, and Asn-101 each contribute to the Na(+) site. Asp-98 serves as a coordination point for serotonin. Topologically, residues 113–115 (GGG) are extracellular. A helical membrane pass occupies residues 116-135 (AFLLPYIIMAIFGGIPLFYM). At 136-160 (ELALGQYHRNGCISIWRKICPIFKG) the chain is on the cytoplasmic side. Tyr-142 is modified (phosphotyrosine). The chain crosses the membrane as a helical span at residues 161–186 (IGYTICIIAFYIASYYNTIIAWALYY). Residues 187 to 252 (LISSFTDRLP…KGLQDVGGVS (66 aa)) are Extracellular-facing. Cys-200 and Cys-209 are joined by a disulfide. N-linked (GlcNAc...) asparagine glycans are attached at residues Asn-208 and Asn-217. The helical transmembrane segment at 253–271 (WQLTLCIMLIFTIIYFSIW) threads the bilayer. The Cytoplasmic segment spans residues 272-277 (KGVKTS). Thr-276 is modified (phosphothreonine). A helical transmembrane segment spans residues 278–297 (GKVVWVTATFPYIVLSVLLV). Residues 298 to 324 (RGATLPGAWKGVLFYLKPNWQKLLETG) are Extracellular-facing. The chain crosses the membrane as a helical span at residues 325–347 (VWIDAAAQIFFSLGPGFGVLLAF). Ser-336 contributes to the Na(+) binding site. Residues 348 to 360 (ASYNKFNNNCYQD) are Cytoplasmic-facing. A helical membrane pass occupies residues 361 to 380 (ALVTSAVNCMTSFVSGFVIF). Position 368 (Asn-368) interacts with Na(+). Topologically, residues 381-421 (TVLGYMAEMRSEDVSEVAKDAGPSLLFITYAEAIANMPAST) are extracellular. A helical membrane pass occupies residues 422–443 (FFAIIFFLMLITLGLDSTFAGL). Na(+)-binding residues include Leu-434, Asp-437, and Ser-438. Thr-439 is a binding site for serotonin. Residues 444-463 (EGVITAVLDEFPHIWAKHRE) are Cytoplasmic-facing. Residues 464–483 (WFVLAVVITCFFGSLTTLTF) form a helical membrane-spanning segment. The Extracellular portion of the chain corresponds to 484–494 (GGAYVVKLLEE). Residues Glu-494 and Tyr-495 each contribute to the serotonin site. The chain crosses the membrane as a helical span at residues 495 to 516 (YATGPAVLTVVFIEAIAVSWFY). The Cytoplasmic segment spans residues 517–538 (GVTQFCSDVKEMLGFSPGWFWR). The chain crosses the membrane as a helical span at residues 539–558 (ICWVAVSPVFLLFIICSFLM). Serotonin contacts are provided by Phe-556 and Ser-559. Residues 559–574 (SPPQLRLFQYSYPHWS) are Extracellular-facing. Residues 575-595 (VILGYCIGTSSVICIPTYITY) traverse the membrane as a helical segment. Over 596–630 (RLVTTPGTLKERIIKSITPETPTEIPCGDICLNAV) the chain is Cytoplasmic. An interaction with RAB4A region spans residues 616-624 (TPTEIPCGD).

It belongs to the sodium:neurotransmitter symporter (SNF) (TC 2.A.22) family. SLC6A4 subfamily. As to quaternary structure, monomer or homooligomer. Interacts (via C-terminus) with SCAMP2; the interaction is direct and retains transporter molecules intracellularly. Interacts with filamentous actin and STX1A. Interacts (via the N-terminus) with STX1A (via the H3 domain); this interaction regulates SLC4A6 channel conductance. Interacts with SEC23A, SEC24C and PATJ. Interacts with NOS1; the interaction may diminish the cell surface localization of SERT in the brain and, correspondingly, reduce serotonin reuptake. Interacts with TGFB1I1. Interacts with ITGAV:ITGB3. Interacts (via C-terminus) with ITGB3; this interaction regulates SLC6A4 trafficking. Phosphorylation at Thr-276 increases 5-HT uptake and is required for cGMP-mediated SERT regulation. As to expression, expressed in the intestinal crypt epithelial cells (at protein level).

It is found in the cell membrane. The protein resides in the endomembrane system. The protein localises to the endosome membrane. It localises to the synapse. Its subcellular location is the cell junction. It is found in the focal adhesion. The protein resides in the cell projection. The protein localises to the neuron projection. The enzyme catalyses serotonin(out) + K(+)(in) + Na(+)(out) + H(+)(in) = serotonin(in) + K(+)(out) + Na(+)(in) + H(+)(out). Functionally, serotonin transporter that cotransports serotonin with one Na(+) ion in exchange for one K(+) ion and possibly one proton in an overall electroneutral transport cycle. Transports serotonin across the plasma membrane from the extracellular compartment to the cytosol thus limiting serotonin intercellular signaling. Essential for serotonin homeostasis in the central nervous system. In the developing somatosensory cortex, acts in glutamatergic neurons to control serotonin uptake and its trophic functions accounting for proper spatial organization of cortical neurons and elaboration of sensory circuits. In the mature cortex, acts primarily in brainstem raphe neurons to mediate serotonin uptake from the synaptic cleft back into the pre-synaptic terminal thus terminating serotonin signaling at the synapse. Modulates mucosal serotonin levels in the gastrointestinal tract through uptake and clearance of serotonin in enterocytes. Required for enteric neurogenesis and gastrointestinal reflexes. Regulates blood serotonin levels by ensuring rapid high affinity uptake of serotonin from plasma to platelets, where it is further stored in dense granules via vesicular monoamine transporters and then released upon stimulation. Mechanistically, the transport cycle starts with an outward-open conformation having Na1(+) and Cl(-) sites occupied. The binding of a second extracellular Na2(+) ion and serotonin substrate leads to structural changes to outward-occluded to inward-occluded to inward-open, where the Na2(+) ion and serotonin are released into the cytosol. Binding of intracellular K(+) ion induces conformational transitions to inward-occluded to outward-open and completes the cycle by releasing K(+) possibly together with a proton bound to Asp-98 into the extracellular compartment. Na1(+) and Cl(-) ions remain bound throughout the transport cycle. Additionally, displays serotonin-induced channel-like conductance for monovalent cations, mainly Na(+) ions. The channel activity is uncoupled from the transport cycle and may contribute to the membrane resting potential or excitability. The protein is Sodium-dependent serotonin transporter (SLC6A4) of Cavia porcellus (Guinea pig).